Reading from the N-terminus, the 175-residue chain is Zinc finger A20 and AN1 domain-containing stress-associated protein 7 (175 aa).

Residues 13-47 (PTEPKLCDNGCGFFGSPSNMNLCSKCYRSLRAEED) form an A20-type zinc finger. 12 residues coordinate Zn(2+): C19, C23, C35, C38, C116, C119, C130, C132, C137, H140, H146, and C148. The segment at 110-156 (VRPNNRCFSCNKKVGVMGFKCKCGSTFCGSHRYPEKHECSFDFKEVG) adopts an AN1-type zinc-finger fold.

Its function is as follows. May be involved in environmental stress response. In Arabidopsis thaliana (Mouse-ear cress), this protein is Zinc finger A20 and AN1 domain-containing stress-associated protein 7 (SAP7).